Here is a 297-residue protein sequence, read N- to C-terminus: uncharacterized protein (297 aa).

The signal sequence occupies residues 1–24 (MRAINKFLITVCIALLASVAVALG). Heme contacts are provided by C58, C61, H62, C141, C144, H145, C167, C170, H171, C223, C226, H227, C264, C267, and H268. Residues 277 to 297 (TNSVDTWSREGEGAEVQQLPH) are disordered.

Post-translationally, binds 5 heme groups per subunit.

This is an uncharacterized protein from Archaeoglobus fulgidus (strain ATCC 49558 / DSM 4304 / JCM 9628 / NBRC 100126 / VC-16).